The following is a 491-amino-acid chain: Probable cytosol aminopeptidase (491 aa).

Residues lysine 264 and aspartate 269 each contribute to the Mn(2+) site. Lysine 276 is an active-site residue. Mn(2+) is bound by residues aspartate 287, aspartate 346, and glutamate 348. Residue arginine 350 is part of the active site.

It belongs to the peptidase M17 family. Requires Mn(2+) as cofactor.

It is found in the cytoplasm. It catalyses the reaction Release of an N-terminal amino acid, Xaa-|-Yaa-, in which Xaa is preferably Leu, but may be other amino acids including Pro although not Arg or Lys, and Yaa may be Pro. Amino acid amides and methyl esters are also readily hydrolyzed, but rates on arylamides are exceedingly low.. The catalysed reaction is Release of an N-terminal amino acid, preferentially leucine, but not glutamic or aspartic acids.. Functionally, presumably involved in the processing and regular turnover of intracellular proteins. Catalyzes the removal of unsubstituted N-terminal amino acids from various peptides. This chain is Probable cytosol aminopeptidase, found in Xylella fastidiosa (strain 9a5c).